The following is a 375-amino-acid chain: MLLLRALFLELKTNKNCKALLLLLIPLLVGLTLIIYGIVLFSTEGVIDHGDHNHLRARFQLTLEEIIVFVVGSIILFFTLASFCVSCFMLMRSPKQKQLEVDHANKTNLKPKAIVNCDLFQLGDYCVFTFKKLSFKQRFKQDFFARSKFSFRSELYRLCLVGVLIALNLALSLIEIPGIVLPWGSSIQFRFFNTAILFIAVRLVGLLSTSLVALITPWLHLLIHPIHTPISSLFYMVNDFLVLWIFYFFFFHLFKAEVIQTTTVVDNKPFSQLVNTKKTKWTKFFSLLVISFLCGFIEGLGFYFGYFLILGNVSSLGLKIYYDGLQQRDLINSSNVLFFLMTTTAIFSIKYIFEMLFFFSVEKNVVNIANHFGLY.

7 helical membrane-spanning segments follow: residues 21–41, 66–86, 160–180, 203–223, 234–254, 289–309, and 338–358; these read LLLL…IVLF, IIVF…FCVS, LVGV…PGIV, LVGL…HLLI, FYMV…FHLF, VISF…YFLI, and FFLM…MLFF.

The protein localises to the cell membrane. This is an uncharacterized protein from Mycoplasma genitalium (strain ATCC 33530 / DSM 19775 / NCTC 10195 / G37) (Mycoplasmoides genitalium).